Consider the following 681-residue polypeptide: Methionine--tRNA ligase (681 aa).

The 'HIGH' region signature appears at 15 to 25 (PYANGPIHLGH). Residues C146, C149, C159, and C162 each contribute to the Zn(2+) site. The short motif at 332-336 (KMSKS) is the 'KMSKS' region element. ATP is bound at residue K335. Residues 547 to 569 (DNMAQAPKDNGKAKKDKKEAKSE) form a disordered region. The segment covering 555 to 569 (DNGKAKKDKKEAKSE) has biased composition (basic and acidic residues). A tRNA-binding domain is found at 580-681 (DFAKIDLRIA…SGAQPGMQVK (102 aa)).

It belongs to the class-I aminoacyl-tRNA synthetase family. MetG type 1 subfamily. In terms of assembly, homodimer. Zn(2+) is required as a cofactor.

Its subcellular location is the cytoplasm. The catalysed reaction is tRNA(Met) + L-methionine + ATP = L-methionyl-tRNA(Met) + AMP + diphosphate. Functionally, is required not only for elongation of protein synthesis but also for the initiation of all mRNA translation through initiator tRNA(fMet) aminoacylation. The polypeptide is Methionine--tRNA ligase (Hahella chejuensis (strain KCTC 2396)).